Reading from the N-terminus, the 144-residue chain is Large ribosomal subunit protein uL16 (144 aa).

Basic residues predominate over residues methionine 1–histidine 16. Positions methionine 1–glutamate 20 are disordered.

It belongs to the universal ribosomal protein uL16 family. In terms of assembly, part of the 50S ribosomal subunit.

Functionally, binds 23S rRNA and is also seen to make contacts with the A and possibly P site tRNAs. This is Large ribosomal subunit protein uL16 from Limosilactobacillus reuteri (strain DSM 20016) (Lactobacillus reuteri).